We begin with the raw amino-acid sequence, 323 residues long: MMENSPKTRRLNILPDNPENTGDGVVGLGRFPSWLHRPLPKGNQLQITGQVINQNRLHTVCEEAKCPNLLECWTKKTATFLVMGKECSRNCGFCDIDFSKNPKPLDRSEPSRVALSVQQLGLKHVVITMVARDDLSDGGSSHLVEVIEAIRQTNEDVTIEVLTSDFEGNRKALSFVLQAKPEIFNHNIETVRRLTPRVRHKATYERTLSVLEQAAQKKYHSQLKVKSGIMVGLGETEEEIFETLLDLKRVGCEIVTIGQYLQPNRQKLLVKSFVHPDIFKKYEQYGLSIGIPHLYCGPFVRSSYNANLVLMRANQKEAIVNSE.

Cysteine 61, cysteine 66, cysteine 72, cysteine 87, cysteine 91, cysteine 94, and serine 303 together coordinate [4Fe-4S] cluster. Positions 73-292 constitute a Radical SAM core domain; sequence WTKKTATFLV…EQYGLSIGIP (220 aa).

The protein belongs to the radical SAM superfamily. Lipoyl synthase family. [4Fe-4S] cluster is required as a cofactor.

Its subcellular location is the cytoplasm. The catalysed reaction is [[Fe-S] cluster scaffold protein carrying a second [4Fe-4S](2+) cluster] + N(6)-octanoyl-L-lysyl-[protein] + 2 oxidized [2Fe-2S]-[ferredoxin] + 2 S-adenosyl-L-methionine + 4 H(+) = [[Fe-S] cluster scaffold protein] + N(6)-[(R)-dihydrolipoyl]-L-lysyl-[protein] + 4 Fe(3+) + 2 hydrogen sulfide + 2 5'-deoxyadenosine + 2 L-methionine + 2 reduced [2Fe-2S]-[ferredoxin]. Its pathway is protein modification; protein lipoylation via endogenous pathway; protein N(6)-(lipoyl)lysine from octanoyl-[acyl-carrier-protein]: step 2/2. Its function is as follows. Catalyzes the radical-mediated insertion of two sulfur atoms into the C-6 and C-8 positions of the octanoyl moiety bound to the lipoyl domains of lipoate-dependent enzymes, thereby converting the octanoylated domains into lipoylated derivatives. The protein is Lipoyl synthase of Protochlamydia amoebophila (strain UWE25).